The primary structure comprises 385 residues: Muconate cycloisomerase 1-2 (385 aa).

Lysine 171 is an active-site residue. Mn(2+) is bound by residues glutamate 226 and aspartate 251.

Belongs to the mandelate racemase/muconate lactonizing enzyme family. As to quaternary structure, homooctamer. Mn(2+) is required as a cofactor.

It carries out the reaction (S)-muconolactone = cis,cis-muconate + H(+). It participates in aromatic compound metabolism; beta-ketoadipate pathway; 5-oxo-4,5-dihydro-2-furylacetate from catechol: step 2/3. Catalyzes a syn cycloisomerization. This is Muconate cycloisomerase 1-2 (catB2) from Acinetobacter lwoffii.